Consider the following 546-residue polypeptide: CTP synthase (546 aa).

The amidoligase domain stretch occupies residues 1 to 266 (MTTRYIFVTG…DDLVVKRFGL (266 aa)). Residue serine 14 participates in CTP binding. Position 14 (serine 14) interacts with UTP. Residues 15 to 20 (SLGKGI) and aspartate 72 each bind ATP. Positions 72 and 140 each coordinate Mg(2+). CTP is bound by residues 147–149 (DIE), 187–192 (KTKPTQ), and lysine 223. UTP-binding positions include 187 to 192 (KTKPTQ) and lysine 223. 239–241 (KDV) is an ATP binding site. The Glutamine amidotransferase type-1 domain maps to 291 to 542 (VIGMVGKYIE…VAAASAHQKR (252 aa)). Glycine 352 is an L-glutamine binding site. The active-site Nucleophile; for glutamine hydrolysis is cysteine 379. L-glutamine contacts are provided by residues 380–383 (LGMQ), glutamate 403, and arginine 470. Active-site residues include histidine 515 and glutamate 517.

This sequence belongs to the CTP synthase family. In terms of assembly, homotetramer.

The catalysed reaction is UTP + L-glutamine + ATP + H2O = CTP + L-glutamate + ADP + phosphate + 2 H(+). It catalyses the reaction L-glutamine + H2O = L-glutamate + NH4(+). It carries out the reaction UTP + NH4(+) + ATP = CTP + ADP + phosphate + 2 H(+). It functions in the pathway pyrimidine metabolism; CTP biosynthesis via de novo pathway; CTP from UDP: step 2/2. Its activity is regulated as follows. Allosterically activated by GTP, when glutamine is the substrate; GTP has no effect on the reaction when ammonia is the substrate. The allosteric effector GTP functions by stabilizing the protein conformation that binds the tetrahedral intermediate(s) formed during glutamine hydrolysis. Inhibited by the product CTP, via allosteric rather than competitive inhibition. In terms of biological role, catalyzes the ATP-dependent amination of UTP to CTP with either L-glutamine or ammonia as the source of nitrogen. Regulates intracellular CTP levels through interactions with the four ribonucleotide triphosphates. The polypeptide is CTP synthase (Shewanella sp. (strain ANA-3)).